The primary structure comprises 483 residues: MAWQLTVPELQDQLQCPICLEVFKEPLMLQCGHSYCKNCLDSLSEHLDSELRCPVCRQSVDCSSSPPNVSLARVIDALRLPGDTEPTVCVHHRNPLSLFCEKDQEFICGLCGLLGSHQHHRVTPVSTVYSRMKEELAGRLSELKEQHRDVEEHIGKLVNNRTRIINESDVFSWVIRREFQELHHLVDEEKARCLEGVESHTRGLVASLDMQLEQAQGTQERLAQAERVLEQFGNESHHEFIRFHSITSRGEVQQARPLEGVFSPISFKPALHQADIKLTVWKRLFRKVLPAPESLKLDPATAHPLLELSKGNTVVHCGLLAQRRASQPERFDYSTCVLASKGFSWGRHYWEVVVGSKSDWRLGVIKGTASRKGKLSKSPEHGVWLIGLKEGRLYEAFGCPRLPLPVAGHPHRIGVYLHYEQGELTFFDADRPDDLRALYTFQADFQGKLYPILDTCWHERGSNSLPMVLPPPSAPGHLTRAQV.

The RING-type zinc finger occupies 16–57; that stretch reads CPICLEVFKEPLMLQCGHSYCKNCLDSLSEHLDSELRCPVCR. The B box-type zinc-finger motif lies at 84–125; the sequence is TEPTVCVHHRNPLSLFCEKDQEFICGLCGLLGSHQHHRVTPV. Residues C89, H92, C111, and H117 each contribute to the Zn(2+) site. Coiled coils occupy residues 127 to 169 and 203 to 236; these read TVYS…NESD and GLVA…GNES. Residues 275-474 form the B30.2/SPRY domain; it reads DIKLTVWKRL…LPMVLPPPSA (200 aa). Position 372 is an N6-acetyllysine (K372).

Belongs to the TRIM/RBCC family. Can form dimers and trimers. Interacts with several E2 ubiquitin-conjugating enzymes, including UBE2L6, UBE2E1, UBE2E3. No interaction with UBE2H. Interacts with BECN1. Interacts with SQSTM1. Interacts with NLRP3. Auto-ubiquitinated. In terms of processing, acetylated by EP300 and KAT2B. HDAC6 drives TRIM50 deacetylation. Acetylation antagonizes with TRIM50 ubiquitination.

Its subcellular location is the cytoplasm. It carries out the reaction S-ubiquitinyl-[E2 ubiquitin-conjugating enzyme]-L-cysteine + [acceptor protein]-L-lysine = [E2 ubiquitin-conjugating enzyme]-L-cysteine + N(6)-ubiquitinyl-[acceptor protein]-L-lysine.. Its function is as follows. E3 ubiquitin-protein ligase that ubiquitinates Beclin-1/BECN1 in a 'Lys-63'-dependent manner enhancing its binding to ULK1. In turn, promotes starvation-induced autophagy activation. Also interacts with p62/SQSTM1 protein and thereby induces the formation and the autophagy clearance of aggresome-associated polyubiquitinated proteins through HDAC6 interaction. Also promotes NLRP3 inflammasome activation by directly inducing NLRP3 oligomerization independent of its E3 ligase function. This chain is E3 ubiquitin-protein ligase TRIM50 (Trim50), found in Rattus norvegicus (Rat).